We begin with the raw amino-acid sequence, 311 residues long: Glycosyltransferase 6 domain-containing protein 1 (311 aa).

The Cytoplasmic portion of the chain corresponds to 1-5 (MKAKG). A helical; Signal-anchor for type II membrane protein transmembrane segment spans residues 6–26 (RILLLTSCLFLLLLLLAKIHL). Over 27 to 311 (RNHQEEELPL…KVAHYPTDDL (285 aa)) the chain is Lumenal. Residue asparagine 77 is glycosylated (N-linked (GlcNAc...) asparagine). Substrate is bound by residues 85–90 (FAVSSF), 176–178 (SVN), and 198–201 (HAWW). The active-site Nucleophile is the glutamate 266.

Belongs to the glycosyltransferase 6 family. Requires Mn(2+) as cofactor.

The protein localises to the membrane. In Rattus norvegicus (Rat), this protein is Glycosyltransferase 6 domain-containing protein 1 (Glt6d1).